A 315-amino-acid chain; its full sequence is Tetraacyldisaccharide 4'-kinase (315 aa).

45–52 (SVGGSGKT) is a binding site for ATP.

Belongs to the LpxK family.

The catalysed reaction is a lipid A disaccharide + ATP = a lipid IVA + ADP + H(+). It functions in the pathway glycolipid biosynthesis; lipid IV(A) biosynthesis; lipid IV(A) from (3R)-3-hydroxytetradecanoyl-[acyl-carrier-protein] and UDP-N-acetyl-alpha-D-glucosamine: step 6/6. In terms of biological role, transfers the gamma-phosphate of ATP to the 4'-position of a tetraacyldisaccharide 1-phosphate intermediate (termed DS-1-P) to form tetraacyldisaccharide 1,4'-bis-phosphate (lipid IVA). The polypeptide is Tetraacyldisaccharide 4'-kinase (Aquifex aeolicus (strain VF5)).